A 488-amino-acid polypeptide reads, in one-letter code: Elongation factor Tu, chloroplastic (488 aa).

The interval Met1–Pro20 is disordered. The transit peptide at Met1–Arg79 directs the protein to the chloroplast. A tr-type G domain is found at Lys89–Gln293. The segment at Gly98 to Thr105 is G1. Gly98 to Thr105 is a GTP binding site. Positions Gly139–Asn143 are G2. A G3 region spans residues Asp160–Gly163. GTP-binding positions include Asp160–His164 and Asn215–Asp218. The interval Asn215 to Asp218 is G4. The tract at residues Ser253–Leu255 is G5.

This sequence belongs to the TRAFAC class translation factor GTPase superfamily. Classic translation factor GTPase family. EF-Tu/EF-1A subfamily. Higher expression in leaves than in roots.

Its subcellular location is the plastid. It localises to the chloroplast. Its function is as follows. This protein promotes the GTP-dependent binding of aminoacyl-tRNA to the A-site of ribosomes during protein biosynthesis. In Pisum sativum (Garden pea), this protein is Elongation factor Tu, chloroplastic (tufA).